Reading from the N-terminus, the 328-residue chain is Glycerol-3-phosphate dehydrogenase [NAD(P)+] (328 aa).

Trp15, Arg35, Arg36, and Lys105 together coordinate NADPH. Sn-glycerol 3-phosphate-binding residues include Lys105 and Gly131. Ala135 contributes to the NADPH binding site. Sn-glycerol 3-phosphate contacts are provided by Lys186, Asp239, Ser249, Arg250, and Asn251. The active-site Proton acceptor is Lys186. NADPH is bound at residue Arg250. Val270 and Glu272 together coordinate NADPH.

This sequence belongs to the NAD-dependent glycerol-3-phosphate dehydrogenase family.

It localises to the cytoplasm. The enzyme catalyses sn-glycerol 3-phosphate + NAD(+) = dihydroxyacetone phosphate + NADH + H(+). It carries out the reaction sn-glycerol 3-phosphate + NADP(+) = dihydroxyacetone phosphate + NADPH + H(+). The protein operates within membrane lipid metabolism; glycerophospholipid metabolism. In terms of biological role, catalyzes the reduction of the glycolytic intermediate dihydroxyacetone phosphate (DHAP) to sn-glycerol 3-phosphate (G3P), the key precursor for phospholipid synthesis. This Deinococcus radiodurans (strain ATCC 13939 / DSM 20539 / JCM 16871 / CCUG 27074 / LMG 4051 / NBRC 15346 / NCIMB 9279 / VKM B-1422 / R1) protein is Glycerol-3-phosphate dehydrogenase [NAD(P)+].